We begin with the raw amino-acid sequence, 932 residues long: Protocadherin gamma-A2 (932 aa).

The N-terminal stretch at 1 to 28 (MAALQKLPHCRKLVLLCFLLATLWEARA) is a signal peptide. Cadherin domains follow at residues 29 to 133 (GQIR…APRF), 134 to 242 (GVEE…APVF), 243 to 347 (TQPE…APEF), 348 to 452 (YMTS…APAF), 453 to 562 (SRTS…APEI), and 570 to 682 (DGST…EPSA). Residues 29–692 (GQIRYSVREE…IPNDSDLTLY (664 aa)) lie on the Extracellular side of the membrane. 2 N-linked (GlcNAc...) asparagine glycosylation sites follow: Asn-419 and Asn-545. The N-linked (GlcNAc...) asparagine glycan is linked to Asn-685. The helical transmembrane segment at 693–713 (LVVAVAAVSCVFLAFVIVLLA) threads the bilayer. Residues 714 to 932 (HRLRRWHKSR…KKKSGKKEKK (219 aa)) are Cytoplasmic-facing. Disordered stretches follow at residues 798–841 (LEEE…WPNN) and 902–932 (ATLT…KEKK). Positions 806–841 (FSQQAPPNTDWRFSQAQRPGTSGSQNGDDTGTWPNN) are enriched in polar residues. Positions 922-932 (NKKKSGKKEKK) are enriched in basic residues.

It is found in the cell membrane. Potential calcium-dependent cell-adhesion protein. May be involved in the establishment and maintenance of specific neuronal connections in the brain. In Homo sapiens (Human), this protein is Protocadherin gamma-A2 (PCDHGA2).